Here is a 372-residue protein sequence, read N- to C-terminus: Glutamate 5-kinase (372 aa).

Lys-14 contacts ATP. Residues Ser-54, Asp-141, and Asn-153 each coordinate substrate. 173–174 (TD) provides a ligand contact to ATP. The 79-residue stretch at 280–358 (RGTLTLDEGA…DEIEKLLGYV (79 aa)) folds into the PUA domain.

Belongs to the glutamate 5-kinase family.

The protein localises to the cytoplasm. The enzyme catalyses L-glutamate + ATP = L-glutamyl 5-phosphate + ADP. The protein operates within amino-acid biosynthesis; L-proline biosynthesis; L-glutamate 5-semialdehyde from L-glutamate: step 1/2. Functionally, catalyzes the transfer of a phosphate group to glutamate to form L-glutamate 5-phosphate. The sequence is that of Glutamate 5-kinase from Stutzerimonas stutzeri (strain A1501) (Pseudomonas stutzeri).